The sequence spans 117 residues: Large ribosomal subunit protein bL20 (117 aa).

The protein belongs to the bacterial ribosomal protein bL20 family.

Binds directly to 23S ribosomal RNA and is necessary for the in vitro assembly process of the 50S ribosomal subunit. It is not involved in the protein synthesizing functions of that subunit. This chain is Large ribosomal subunit protein bL20, found in Actinobacillus succinogenes (strain ATCC 55618 / DSM 22257 / CCUG 43843 / 130Z).